A 156-amino-acid polypeptide reads, in one-letter code: 3-hydroxyacyl-[acyl-carrier-protein] dehydratase FabZ (156 aa).

H57 is an active-site residue.

The protein belongs to the thioester dehydratase family. FabZ subfamily.

It is found in the cytoplasm. It catalyses the reaction a (3R)-hydroxyacyl-[ACP] = a (2E)-enoyl-[ACP] + H2O. In terms of biological role, involved in unsaturated fatty acids biosynthesis. Catalyzes the dehydration of short chain beta-hydroxyacyl-ACPs and long chain saturated and unsaturated beta-hydroxyacyl-ACPs. The protein is 3-hydroxyacyl-[acyl-carrier-protein] dehydratase FabZ of Anaeromyxobacter dehalogenans (strain 2CP-1 / ATCC BAA-258).